Consider the following 330-residue polypeptide: Probable transposase for insertion sequence element ISH11 (330 aa).

Belongs to the transposase 11 family.

Its function is as follows. Involved in the transposition of the insertion sequence ISH11. The chain is Probable transposase for insertion sequence element ISH11 from Halobacterium salinarum (strain ATCC 29341 / DSM 671 / R1).